The sequence spans 215 residues: Rho-related GTP-binding protein RhoF (215 aa).

M1 is subject to N-acetylmethionine. Position 30–37 (30–37 (GDGGCGKT)) interacts with GTP. Residues 52–60 (YAPSVFEKY) carry the Effector region motif. GTP contacts are provided by residues 77–81 (DTAGQ) and 135–138 (CKTD). C212 is subject to Cysteine methyl ester. C212 carries the S-geranylgeranyl cysteine lipid modification. A propeptide spans 213–215 (LLL) (removed in mature form).

It belongs to the small GTPase superfamily. Rho family.

Its subcellular location is the cell membrane. The protein resides in the cytoplasm. It is found in the cytoskeleton. Functionally, plasma membrane-associated small GTPase which cycles between an active GTP-bound and an inactive GDP-bound state. Causes the formation of thin, actin-rich surface projections called filopodia. Functions cooperatively with CDC42 and Rac to generate additional structures, increasing the diversity of actin-based morphology. The chain is Rho-related GTP-binding protein RhoF (RHOF) from Bos taurus (Bovine).